The chain runs to 418 residues: Nickel and cobalt resistance protein CnrC (418 aa).

The N-terminal stretch at 1–29 (MKQVISSFLCRPRFVGSAIWLLPVALSHA) is a signal peptide.

Belongs to the outer membrane factor (OMF) (TC 1.B.17) family.

Functionally, the products of the genes cnrA, cnrB, and cnrC are likely to form a membrane-bound protein complex catalyzing an energy-dependent efflux of Ni(2+) and Co(2+). The mechanism of action of the CnrCBA complex may be that of a proton/cation antiporter. This Cupriavidus metallidurans (strain ATCC 43123 / DSM 2839 / NBRC 102507 / CH34) (Ralstonia metallidurans) protein is Nickel and cobalt resistance protein CnrC (cnrC).